A 195-amino-acid chain; its full sequence is ATP-dependent Clp protease proteolytic subunit (195 aa).

The active-site Nucleophile is the Ser99. Residue His124 is part of the active site.

This sequence belongs to the peptidase S14 family. Fourteen ClpP subunits assemble into 2 heptameric rings which stack back to back to give a disk-like structure with a central cavity, resembling the structure of eukaryotic proteasomes.

The protein resides in the cytoplasm. The enzyme catalyses Hydrolysis of proteins to small peptides in the presence of ATP and magnesium. alpha-casein is the usual test substrate. In the absence of ATP, only oligopeptides shorter than five residues are hydrolyzed (such as succinyl-Leu-Tyr-|-NHMec, and Leu-Tyr-Leu-|-Tyr-Trp, in which cleavage of the -Tyr-|-Leu- and -Tyr-|-Trp bonds also occurs).. Its function is as follows. Cleaves peptides in various proteins in a process that requires ATP hydrolysis. Has a chymotrypsin-like activity. Plays a major role in the degradation of misfolded proteins. The polypeptide is ATP-dependent Clp protease proteolytic subunit (Coxiella burnetii (strain RSA 331 / Henzerling II)).